A 129-amino-acid chain; its full sequence is Small ribosomal subunit protein eS6 (129 aa).

Belongs to the eukaryotic ribosomal protein eS6 family.

The protein is Small ribosomal subunit protein eS6 of Archaeoglobus fulgidus (strain ATCC 49558 / DSM 4304 / JCM 9628 / NBRC 100126 / VC-16).